The chain runs to 426 residues: Histidine--tRNA ligase (426 aa).

The protein belongs to the class-II aminoacyl-tRNA synthetase family. In terms of assembly, homodimer.

Its subcellular location is the cytoplasm. The enzyme catalyses tRNA(His) + L-histidine + ATP = L-histidyl-tRNA(His) + AMP + diphosphate + H(+). This Streptococcus sanguinis (strain SK36) protein is Histidine--tRNA ligase.